Here is a 411-residue protein sequence, read N- to C-terminus: tRNA (uracil(54)-C(5))-methyltransferase (411 aa).

Residues Cys62, Cys68, Cys71, and Cys138 each contribute to the [4Fe-4S] cluster site. Residues Gln254, Tyr280, Thr285, 301-302, Asp328, and Asp342 each bind S-adenosyl-L-methionine; that span reads DS. Cys369 serves as the catalytic Nucleophile. The active-site Proton acceptor is Glu402.

Belongs to the class I-like SAM-binding methyltransferase superfamily. RNA M5U methyltransferase family.

It catalyses the reaction uridine(54) in tRNA + S-adenosyl-L-methionine = 5-methyluridine(54) in tRNA + S-adenosyl-L-homocysteine + H(+). Catalyzes the formation of 5-methyl-uridine at position 54 (m5U54) in tRNA. This Pyrococcus furiosus (strain ATCC 43587 / DSM 3638 / JCM 8422 / Vc1) protein is tRNA (uracil(54)-C(5))-methyltransferase.